The primary structure comprises 103 residues: Large ribosomal subunit protein bL21 (103 aa).

Belongs to the bacterial ribosomal protein bL21 family. Part of the 50S ribosomal subunit. Contacts protein L20.

This protein binds to 23S rRNA in the presence of protein L20. The protein is Large ribosomal subunit protein bL21 of Tolumonas auensis (strain DSM 9187 / NBRC 110442 / TA 4).